The following is a 498-amino-acid chain: Hyaluronan-mediated motility receptor (498 aa).

The tract at residues 150 to 331 is required for interaction with FAM83D; it reads EEMTSERNVF…ITDLQNQLRQ (182 aa). Asparagine 262 and asparagine 302 each carry an N-linked (GlcNAc...) asparagine glycan. Hyaluronic acid-binding stretches follow at residues 420 to 430 and 442 to 451; these read KQKIKHVVKLK and KLRSQLAKRK. Residue asparagine 483 is glycosylated (N-linked (GlcNAc...) asparagine). Threonine 488 bears the Phosphothreonine mark.

In terms of assembly, interacts with ANKRD26. Interacts with DYNLL1. Interacts with FAM83D/CHICA.

It is found in the cell surface. It localises to the cytoplasm. The protein resides in the cytoskeleton. The protein localises to the spindle. Functionally, receptor for hyaluronic acid (HA). Involved in cell motility. When hyaluronan binds to HMMR, the phosphorylation of a number of proteins, including the PTK2/FAK1 occurs. May also be involved in cellular transformation and metastasis formation, and in regulating extracellular-regulated kinase (ERK) activity. May act as a regulator of adipogenisis. The protein is Hyaluronan-mediated motility receptor (Hmmr) of Rattus norvegicus (Rat).